The primary structure comprises 337 residues: Zinc finger protein 488 (337 aa).

A compositionally biased stretch (polar residues) spans M1–S10. 3 disordered regions span residues M1 to K32, S55 to D83, and S146 to A179. Residues T69–E184 are important for transcriptional repression activity. 2 consecutive C2H2-type zinc fingers follow at residues N272–H299 and L314–H336. The Nuclear localization signal signature appears at H295–P302.

This sequence belongs to the krueppel C2H2-type zinc-finger protein family. As to quaternary structure, interacts with OLIG2.

The protein localises to the nucleus. Transcriptional repressor. Plays a role in oligodendrocyte differentiation, together with OLIG2. Mediates Notch signaling-activated formation of oligodendrocyte precursors. Promotes differentiation of adult neural stem progenitor cells (NSPCs) into mature oligodendrocytes and contributes to remyelination following nerve injury. The chain is Zinc finger protein 488 (Znf488) from Mus musculus (Mouse).